We begin with the raw amino-acid sequence, 457 residues long: Cysteine--tRNA ligase (457 aa).

Residue C29 participates in Zn(2+) binding. Positions 31 to 41 match the 'HIGH' region motif; sequence PTVYDNPHIGN. Residues C214, H239, and E243 each contribute to the Zn(2+) site. The 'KMSKS' region motif lies at 272–276; it reads KMSKS. K275 serves as a coordination point for ATP.

This sequence belongs to the class-I aminoacyl-tRNA synthetase family. Monomer. It depends on Zn(2+) as a cofactor.

Its subcellular location is the cytoplasm. It carries out the reaction tRNA(Cys) + L-cysteine + ATP = L-cysteinyl-tRNA(Cys) + AMP + diphosphate. This is Cysteine--tRNA ligase (cysS) from Rickettsia prowazekii (strain Madrid E).